We begin with the raw amino-acid sequence, 269 residues long: 4-hydroxy-tetrahydrodipicolinate reductase (269 aa).

Residues 11-16 (GASGRM) and Glu-37 each bind NAD(+). Residue Arg-38 coordinates NADP(+). NAD(+) contacts are provided by residues 101 to 103 (GTT) and 125 to 128 (AGNM). Catalysis depends on His-158, which acts as the Proton donor/acceptor. His-159 is a binding site for (S)-2,3,4,5-tetrahydrodipicolinate. Lys-162 (proton donor) is an active-site residue. 168-169 (GT) is a binding site for (S)-2,3,4,5-tetrahydrodipicolinate.

It belongs to the DapB family.

It is found in the cytoplasm. The enzyme catalyses (S)-2,3,4,5-tetrahydrodipicolinate + NAD(+) + H2O = (2S,4S)-4-hydroxy-2,3,4,5-tetrahydrodipicolinate + NADH + H(+). The catalysed reaction is (S)-2,3,4,5-tetrahydrodipicolinate + NADP(+) + H2O = (2S,4S)-4-hydroxy-2,3,4,5-tetrahydrodipicolinate + NADPH + H(+). It functions in the pathway amino-acid biosynthesis; L-lysine biosynthesis via DAP pathway; (S)-tetrahydrodipicolinate from L-aspartate: step 4/4. Its function is as follows. Catalyzes the conversion of 4-hydroxy-tetrahydrodipicolinate (HTPA) to tetrahydrodipicolinate. In Cereibacter sphaeroides (strain ATCC 17029 / ATH 2.4.9) (Rhodobacter sphaeroides), this protein is 4-hydroxy-tetrahydrodipicolinate reductase.